The sequence spans 86 residues: Co-chaperonin GroES (86 aa).

The protein belongs to the GroES chaperonin family. Heptamer of 7 subunits arranged in a ring. Interacts with the chaperonin GroEL.

Its subcellular location is the cytoplasm. In terms of biological role, together with the chaperonin GroEL, plays an essential role in assisting protein folding. The GroEL-GroES system forms a nano-cage that allows encapsulation of the non-native substrate proteins and provides a physical environment optimized to promote and accelerate protein folding. GroES binds to the apical surface of the GroEL ring, thereby capping the opening of the GroEL channel. In Campylobacter jejuni subsp. doylei (strain ATCC BAA-1458 / RM4099 / 269.97), this protein is Co-chaperonin GroES.